The chain runs to 100 residues: Small ribosomal subunit protein uS14 (100 aa).

Belongs to the universal ribosomal protein uS14 family. In terms of assembly, part of the 30S ribosomal subunit. Contacts proteins S3 and S10.

Its function is as follows. Binds 16S rRNA, required for the assembly of 30S particles and may also be responsible for determining the conformation of the 16S rRNA at the A site. The chain is Small ribosomal subunit protein uS14 from Acaryochloris marina (strain MBIC 11017).